Here is a 25-residue protein sequence, read N- to C-terminus: Chrysophsin-1 (25 aa).

His25 carries the histidine amide modification.

Gill. Localized in certain epithelial cells lining the surface of secondary lamellae and eosinophilic granule cell-like cells at the base of secondary lamellae.

It localises to the secreted. In terms of biological role, has antibacterial activity against Gram-positive bacteria B.subtilis ATCC 6633, L.garvieae ATCC 49156 and S.iniae F-8502, and Gram-negative bacteria E.coli WT-2, V.anguillarum ATCC 19264, V.penaeicida KHA, V.harveyi ATCC 14126, V.vulnificus ATCC 33148, A.salmonicida NCMB 1102 and P.putida ATCC 12633. Has hemolytic activity against human red blood cells. Seems to disrupt the membranes by adopting an alpha helical conformation. May play a significant role in innate host defense. The chain is Chrysophsin-1 from Pagrus major (Red sea bream).